A 170-amino-acid chain; its full sequence is uncharacterized protein (170 aa).

Residues 35–57 (EEVMPATAPSTDPAVPKDAQEAD) form a disordered region.

This is an uncharacterized protein from Candida tsukubaensis (Yeast).